The following is a 521-amino-acid chain: Forkhead box protein N4 (521 aa).

The segment at residues 197–293 (KPIYSYSCLI…EEMHKWKRKD (97 aa)) is a DNA-binding region (fork-head). Residues 371–406 (PQAHLAPDSPAPAQTPPLHALPSLSPGPLPQPAMGR) form a disordered region.

Mainly expressed in proliferator progenitor cells in brain and retina rather than differentiated cells. In contrast, is expressed only in postmitotic epithelial cells rather than in proliferative progenitors in the proximal airway.

It localises to the nucleus. Its function is as follows. Transcription factor essential for neural and some non-neural tissues development, such as retina and lung respectively. Binds to an 11-bp consensus sequence containing the invariant tetranucleotide 5'-ACGC-3'. During development of the central nervous system, is required to specify the amacrine and horizontal cell fates from multipotent retinal progenitors while suppressing the alternative photoreceptor cell fates through activating DLL4-NOTCH signaling. Also acts synergistically with ASCL1/MASH1 to activate DLL4-NOTCH signaling and drive commitment of p2 progenitors to the V2b interneuron fates during spinal cord neurogenesis. In development of non-neural tissues, plays an essential role in the specification of the atrioventricular canal and is indirectly required for patterning the distal airway during lung development. The protein is Forkhead box protein N4 (Foxn4) of Mus musculus (Mouse).